A 191-amino-acid polypeptide reads, in one-letter code: Ribonuclease HII (191 aa).

In terms of domain architecture, RNase H type-2 spans 7-191 (ILMAGVDEVG…YSPVADLISK (185 aa)). Positions 13, 14, and 103 each coordinate a divalent metal cation.

It belongs to the RNase HII family. The cofactor is Mn(2+). Requires Mg(2+) as cofactor.

The protein localises to the cytoplasm. The catalysed reaction is Endonucleolytic cleavage to 5'-phosphomonoester.. In terms of biological role, endonuclease that specifically degrades the RNA of RNA-DNA hybrids. The chain is Ribonuclease HII from Legionella pneumophila (strain Paris).